The following is a 765-amino-acid chain: Probable dipeptidyl peptidase 4 (765 aa).

Positions 1–14 (MKWSILLLVGCAAA) are cleaved as a signal peptide. N-linked (GlcNAc...) asparagine glycans are attached at residues asparagine 35, asparagine 78, asparagine 101, asparagine 110, asparagine 169, asparagine 218, asparagine 465, and asparagine 490. Serine 613 (charge relay system) is an active-site residue. Residue asparagine 665 is glycosylated (N-linked (GlcNAc...) asparagine). Active-site charge relay system residues include aspartate 690 and histidine 725.

It belongs to the peptidase S9B family.

The protein resides in the secreted. The catalysed reaction is Release of an N-terminal dipeptide, Xaa-Yaa-|-Zaa-, from a polypeptide, preferentially when Yaa is Pro, provided Zaa is neither Pro nor hydroxyproline.. Its function is as follows. Extracellular dipeptidyl-peptidase which removes N-terminal dipeptides sequentially from polypeptides having unsubstituted N-termini provided that the penultimate residue is proline. Contributes to pathogenicity. This chain is Probable dipeptidyl peptidase 4 (dpp4), found in Aspergillus fumigatus (strain ATCC MYA-4609 / CBS 101355 / FGSC A1100 / Af293) (Neosartorya fumigata).